The chain runs to 1080 residues: Histone deacetylase 4 (1080 aa).

Disordered regions lie at residues 1 to 25 (MSSQ…PPRV), 132 to 165 (KLEQ…ESAV), and 205 to 312 (TQHS…ISAE). The span at 132 to 162 (KLEQHRQEQELEKQHREQKLQQLKNKEKGKE) shows a compositional bias: basic and acidic residues. The segment covering 205-224 (TQHSSLDQSSPPQSGVSGTY) has biased composition (polar residues). 2 stretches are compositionally biased toward basic and acidic residues: residues 233–244 (DSKDDFPLRKTA) and 258–273 (KVAE…RKDG). Low complexity predominate over residues 289–312 (SACNSAPGSGPSSPNNSSNNISAE). A PxLPxI/L motif is present at residues 348-353 (PSLPNI). 3 disordered regions span residues 506–527 (KPNE…ELRE), 558–579 (EPIE…GQRQ), and 622–646 (PLSR…PTKP). Residues 509 to 527 (EPARQHESHPEETEEELRE) show a composition bias toward basic and acidic residues. The segment covering 560–571 (IESDEEEAEPQQ) has biased composition (acidic residues). Positions 625-637 (RAQSSPASATFPM) are enriched in polar residues. Residues 651–1080 (GLVYDTLMLK…DEPMEEEPPL (430 aa)) are histone deacetylase. Zn(2+) contacts are provided by C663, C665, H671, and C747. H799 is a catalytic residue. Positions 1055 to 1080 (MASLSVGVKPAEKRPDDEPMEEEPPL) are disordered.

This sequence belongs to the histone deacetylase family. HD type 2 subfamily.

The protein localises to the nucleus. The catalysed reaction is N(6)-acetyl-L-lysyl-[histone] + H2O = L-lysyl-[histone] + acetate. Its function is as follows. Responsible for the deacetylation of lysine residues on the N-terminal part of the core histones (H2A, H2B, H3 and H4). Histone deacetylation gives a tag for epigenetic repression and plays an important role in transcriptional regulation, cell cycle progression and developmental events. Histone deacetylases act via the formation of large multiprotein complexes. The chain is Histone deacetylase 4 (HDAC4) from Gallus gallus (Chicken).